The sequence spans 40 residues: Photosystem I reaction center subunit IX (40 aa).

Residues 4–24 (FFESWPMAAVLWVWLTAGIIV) traverse the membrane as a helical segment.

This sequence belongs to the PsaJ family.

It localises to the cellular thylakoid membrane. In terms of biological role, may help in the organization of the PsaE and PsaF subunits. The chain is Photosystem I reaction center subunit IX from Prochlorococcus marinus (strain MIT 9313).